The sequence spans 282 residues: Biotin synthase (282 aa).

One can recognise a Radical SAM core domain in the interval 1 to 230 (MSDNKIYLCA…NQMLMIAGGR (230 aa)). The [4Fe-4S] cluster site is built by Cys19, Cys23, and Cys26. Residues Cys63, Cys98, and Cys156 each contribute to the [2Fe-2S] cluster site.

The protein belongs to the radical SAM superfamily. Biotin synthase family. In terms of assembly, homodimer. [4Fe-4S] cluster serves as cofactor. Requires [2Fe-2S] cluster as cofactor.

It carries out the reaction (4R,5S)-dethiobiotin + (sulfur carrier)-SH + 2 reduced [2Fe-2S]-[ferredoxin] + 2 S-adenosyl-L-methionine = (sulfur carrier)-H + biotin + 2 5'-deoxyadenosine + 2 L-methionine + 2 oxidized [2Fe-2S]-[ferredoxin]. The protein operates within cofactor biosynthesis; biotin biosynthesis; biotin from 7,8-diaminononanoate: step 2/2. Catalyzes the conversion of dethiobiotin (DTB) to biotin by the insertion of a sulfur atom into dethiobiotin via a radical-based mechanism. The sequence is that of Biotin synthase from Aliarcobacter butzleri (strain RM4018) (Arcobacter butzleri).